An 847-amino-acid polypeptide reads, in one-letter code: Pollen-specific leucine-rich repeat extensin-like protein 2 (847 aa).

The N-terminal stretch at 1 to 20 is a signal peptide; the sequence is MERPFGCFFILLLISYTVVA. LRR repeat units lie at residues 45 to 71, 106 to 130, 131 to 153, 155 to 178, 179 to 202, 204 to 224, 226 to 248, and 249 to 273; these read INKV…AWKK, LTVV…LGLM, TDLA…SLSK, ALMY…SLSW, PSLK…IFDK, LDAI…TIGK, KASV…IGNM, and KNLN…GLLN. Residues Asn-260 and Asn-274 are each glycosylated (N-linked (GlcNAc...) asparagine). LRR repeat units lie at residues 296-319 and 321-343; these read LASV…KFCK and PNLD…CVPG. Residues 381 to 847 are disordered; it reads KDKCSGGSNG…SPPPPMFQGY (467 aa). Basic and acidic residues predominate over residues 438–484; it reads PKHESPKPEEPENKHELPKQKESPKPQPSKPEDSPKPEQPKPEESPK. Pro residues-rich tracts occupy residues 485 to 499 and 533 to 642; these read PEQP…PVSP and VPPP…PPPT. The interval 522-847 is contains the Ser-Pro(4) repeats; sequence SPPPPKVEDT…SPPPPMFQGY (326 aa). 3 stretches are compositionally biased toward polar residues: residues 667-682, 688-720, and 726-752; these read QVPT…QILS, TPVQ…SPVQ, and QAPT…SQAP. 2 stretches are compositionally biased toward low complexity: residues 768 to 783 and 797 to 811; these read PVQS…SSPE and NPSS…TDTS. Over residues 838–847 the composition is skewed to pro residues; that stretch reads SPPPPMFQGY.

In terms of processing, hydroxylated on proline residues in the S-P-P-P-P repeat. Post-translationally, O-glycosylated on hydroxyprolines. Expressed in flowers, stamen, pollen, and pollinated carpels (at protein level).

The protein localises to the secreted. It localises to the cell wall. Functionally, modulates cell morphogenesis by regulating cell wall formation and assembly, and/or growth polarization. In Arabidopsis thaliana (Mouse-ear cress), this protein is Pollen-specific leucine-rich repeat extensin-like protein 2 (PEX2).